We begin with the raw amino-acid sequence, 386 residues long: Bifunctional enzyme IspD/IspF (386 aa).

Residues 1-231 form a 2-C-methyl-D-erythritol 4-phosphate cytidylyltransferase region; that stretch reads MKNGAVIIPA…REKKEPMQKI (231 aa). Positions 232–386 are 2-C-methyl-D-erythritol 2,4-cyclodiphosphate synthase; the sequence is RIGHGFDAHQ…SCHAVVLLQQ (155 aa). Aspartate 238 and histidine 240 together coordinate a divalent metal cation. 4-CDP-2-C-methyl-D-erythritol 2-phosphate-binding positions include 238 to 240 and 264 to 265; these read DAH and HS. Histidine 272 serves as a coordination point for a divalent metal cation. Residues 286–288, 362–365, tyrosine 369, and arginine 372 contribute to the 4-CDP-2-C-methyl-D-erythritol 2-phosphate site; these read DIG and TTTE.

In the N-terminal section; belongs to the IspD/TarI cytidylyltransferase family. IspD subfamily. It in the C-terminal section; belongs to the IspF family. Requires a divalent metal cation as cofactor.

It carries out the reaction 2-C-methyl-D-erythritol 4-phosphate + CTP + H(+) = 4-CDP-2-C-methyl-D-erythritol + diphosphate. The enzyme catalyses 4-CDP-2-C-methyl-D-erythritol 2-phosphate = 2-C-methyl-D-erythritol 2,4-cyclic diphosphate + CMP. The protein operates within isoprenoid biosynthesis; isopentenyl diphosphate biosynthesis via DXP pathway; isopentenyl diphosphate from 1-deoxy-D-xylulose 5-phosphate: step 2/6. It functions in the pathway isoprenoid biosynthesis; isopentenyl diphosphate biosynthesis via DXP pathway; isopentenyl diphosphate from 1-deoxy-D-xylulose 5-phosphate: step 4/6. In terms of biological role, bifunctional enzyme that catalyzes the formation of 4-diphosphocytidyl-2-C-methyl-D-erythritol from CTP and 2-C-methyl-D-erythritol 4-phosphate (MEP) (IspD), and catalyzes the conversion of 4-diphosphocytidyl-2-C-methyl-D-erythritol 2-phosphate (CDP-ME2P) to 2-C-methyl-D-erythritol 2,4-cyclodiphosphate (ME-CPP) with a corresponding release of cytidine 5-monophosphate (CMP) (IspF). The chain is Bifunctional enzyme IspD/IspF from Desulfotalea psychrophila (strain LSv54 / DSM 12343).